The sequence spans 241 residues: Triosephosphate isomerase (241 aa).

Residue 9 to 11 (NWK) participates in substrate binding. H96 functions as the Electrophile in the catalytic mechanism. The active-site Proton acceptor is the E165. Substrate contacts are provided by residues G171, S204, and 225–226 (GG).

Belongs to the triosephosphate isomerase family. As to quaternary structure, homodimer.

The protein localises to the cytoplasm. The catalysed reaction is D-glyceraldehyde 3-phosphate = dihydroxyacetone phosphate. It functions in the pathway carbohydrate biosynthesis; gluconeogenesis. Its pathway is carbohydrate degradation; glycolysis; D-glyceraldehyde 3-phosphate from glycerone phosphate: step 1/1. Functionally, involved in the gluconeogenesis. Catalyzes stereospecifically the conversion of dihydroxyacetone phosphate (DHAP) to D-glyceraldehyde-3-phosphate (G3P). The protein is Triosephosphate isomerase of Nostoc sp. (strain PCC 7120 / SAG 25.82 / UTEX 2576).